Here is a 231-residue protein sequence, read N- to C-terminus: Ureidoacrylate amidohydrolase RutB (231 aa).

The Proton acceptor role is filled by Asp-25. The active site involves Lys-134. Cys-167 serves as the catalytic Nucleophile.

The protein belongs to the isochorismatase family. RutB subfamily.

It catalyses the reaction (Z)-3-ureidoacrylate + H2O + H(+) = (Z)-3-aminoacrylate + NH4(+) + CO2. The enzyme catalyses (Z)-3-ureidoacrylate + H2O = (Z)-3-aminoacrylate + carbamate + H(+). The catalysed reaction is (Z)-2-methylureidoacrylate + H2O + H(+) = (Z)-2-methylaminoacrylate + NH4(+) + CO2. Functionally, hydrolyzes ureidoacrylate to form aminoacrylate and carbamate. The carbamate hydrolyzes spontaneously, thereby releasing one of the nitrogen atoms of the pyrimidine ring as ammonia and one of its carbon atoms as CO2. The sequence is that of Ureidoacrylate amidohydrolase RutB from Escherichia coli (strain SMS-3-5 / SECEC).